Reading from the N-terminus, the 128-residue chain is Disintegrin ocellatusin (128 aa).

An N-terminal signal peptide occupies residues 1 to 20 (MIPVLLVTICLAVFPFQGSS). A propeptide spanning residues 21–65 (IILESGNINDYEIVYPKKVAVLPTGAMNSAHPCYDPVTCQPKEKE) is cleaved from the precursor. Residues 26 to 112 (GNINDYEIVY…DCPRNPYKGE (87 aa)) form the Disintegrin domain. Disulfide bonds link Cys53–Cys59, Cys67–Cys76, Cys72–Cys97, Cys73–Cys102, and Cys85–Cys104. Residues 89–91 (RGD) carry the Cell attachment site motif. Positions 116 to 128 (MEWPAPAKGSVLM) are excised as a propeptide.

In terms of assembly, monomer. In terms of tissue distribution, expressed by the venom gland.

Its subcellular location is the secreted. The disintegrin ocellatusin-10c1 is a poor inhibitor of platelet aggregation. The disintegrin inhibits the adhesion of cells expressing the RGD-dependent integrin alpha-5/beta-1 (ITGA5/ITGB1) to immobilized fibronectin. Inhibition on alpha-2b/beta-3 (ITGA2B/ITGB3) is low, and there is no inhibition on alpha-1/beta-1 (ITGA1/ITGB1), alpha-2/beta-1 (ITGA2/ITGB1) and alpha-6/beta-1 (ITGA6/ITGB1). In terms of biological role, the short monomeric disintegrin ocellatusin inhibits ADP-induced platelet aggregation (IC(50)=168 nM). Inhibits alpha-5/beta-1 (ITGA5/ITGB1) integrin and induces the expression of a ligand-induced binding site epitope on beta-1 integrin subunit. Has a direct chemotactic stimulus on human neutrophils in vitro. The protein is Disintegrin ocellatusin of Echis ocellatus (Ocellated saw-scaled viper).